The primary structure comprises 1563 residues: Rab-3-interacting molecule unc-10 (1563 aa).

The RabBD domain maps to 7-133 (MPDLSHLSAE…AKTGKWFQPE (127 aa)). Positions 25–35 (FKRQKDEEAKE) are enriched in basic and acidic residues. The interval 25-50 (FKRQKDEEAKETQISQKASEELSELD) is disordered. The segment at 66-121 (TQDDAICQICQKTKFADGIGHKCFYCQLRSCARCGGRAQSKNKAIWACSLCQKRQQ) adopts an FYVE-type zinc-finger fold. Zn(2+) is bound by residues Cys72, Cys75, Cys88, Cys91, Cys96, Cys99, Cys113, and Cys116. 2 disordered regions span residues 128 to 466 (KWFQ…DHLN) and 582 to 605 (GGLD…RNDH). Polar residues predominate over residues 172–182 (NTPNYQNNQQP). Composition is skewed to low complexity over residues 190-284 (NHNQ…RNQT) and 300-316 (QTPQ…VGAA). Positions 326 to 345 (QEQHHQQMNEQRTDNNRMRE) are enriched in basic and acidic residues. 2 stretches are compositionally biased toward polar residues: residues 356–367 (RQPSLEQTTPMN) and 379–389 (QRPTFYTGNSE). Low complexity predominate over residues 395-415 (FDGQMQQGSQQNNQNQNQNNR). In terms of domain architecture, PDZ spans 643–733 (HMILHRTENS…DTSVELIVSR (91 aa)). The C2 1 domain maps to 840–962 (IFGRIEVSFV…PLDGEHSLMC (123 aa)). 3 disordered regions span residues 1054–1163 (ENDI…YLGD), 1177–1311 (GQMT…GGSA), and 1346–1373 (VGIP…KEST). Residues 1086–1097 (WTQNHQRQSGYT) show a composition bias toward polar residues. Residues 1112 to 1121 (YNRRQQRRPR) are compositionally biased toward basic residues. The span at 1129 to 1154 (MEREDMYDPTRKHRDDNEYSMRESVR) shows a compositional bias: basic and acidic residues. Residues 1181 to 1230 (PKQHNQQHQPHPLSQAHQQQQTAGVQPQHHQGFQQQQHPQQPNQQMQQMQ) show a composition bias toward low complexity. Polar residues predominate over residues 1242–1255 (GSETLSVHSTNSMP). Residues 1256-1277 (TTMTTVNRRNMNANNTSNDNTS) are compositionally biased toward low complexity. The segment covering 1278-1288 (FAETPTANTNR) has biased composition (polar residues). The segment covering 1297–1311 (NSLASSSSVAGGGSA) has biased composition (low complexity). In terms of domain architecture, C2 2 spans 1417 to 1536 (VLGEIQIALM…LGSQPLIGWY (120 aa)).

In terms of tissue distribution, restricted to discrete puncta in synapse-rich regions of the nervous system including the nerve ring, the ventral nerve cord and the dorsal nerve cord. Localized expression was found in the head.

The protein resides in the synapse. Regulates the efficiency of a post-docking step of the release pathway. Acts after vesicle docking likely via regulating priming. May regulate the conformational changes in syntaxin. Binding of vesicles via rab-3[GTP] to Rim may signal the presence of a docked synaptic vesicle. Rim may then signal to unc-13 to change the conformation of syntaxin from the closed to the open state. Syntaxin could then engage synaptobrevin on the docked vesicle to form SNARE complexes and to prime the vesicle for release. Not required for the development or the structural organization of synapses. May play a role in regulating entry into the dauer state. This Caenorhabditis elegans protein is Rab-3-interacting molecule unc-10.